A 125-amino-acid polypeptide reads, in one-letter code: uncharacterized protein (125 aa).

The protein localises to the plastid. This is an uncharacterized protein from Euglena longa (Euglenophycean alga).